Reading from the N-terminus, the 80-residue chain is Small ribosomal subunit protein uS17 (80 aa).

The protein belongs to the universal ribosomal protein uS17 family. In terms of assembly, part of the 30S ribosomal subunit.

Functionally, one of the primary rRNA binding proteins, it binds specifically to the 5'-end of 16S ribosomal RNA. This Brucella anthropi (strain ATCC 49188 / DSM 6882 / CCUG 24695 / JCM 21032 / LMG 3331 / NBRC 15819 / NCTC 12168 / Alc 37) (Ochrobactrum anthropi) protein is Small ribosomal subunit protein uS17.